We begin with the raw amino-acid sequence, 303 residues long: Magainins (303 aa).

Residues 1 to 18 (MFKGLFICSLIAVICANA) form the signal peptide. Propeptides lie at residues 19 to 26 (LPQPEASA), 33 to 36 (REVR), 62 to 72 (DAEAVGPEAFA), 79 to 82 (REVR), 108 to 118 (DAEAVGPEAFA), 125 to 128 (REVR), 154 to 164 (DAEAVGPEAFA), 171 to 174 (REVR), 200 to 210 (DAEAVGPEAFA), 217 to 220 (REVR), 246 to 256 (DAEAVGPEAFA), 263 to 266 (REVR), and 292 to 303 (DAEAVDDRRWVE).

The protein belongs to the gastrin/cholecystokinin family. Magainin subfamily. Synthesized in the stomach and stored in a novel granular multinucleated cell in the gastric mucosa. It is stored as active, processed peptides in large granules within the granular gland secretions of the skin.

The protein resides in the secreted. Functionally, antimicrobial peptides that inhibit the growth of numerous species of bacteria and fungi and induce osmotic lysis of protozoa. Rapidly inactivates channel catfish herpesvirus (ED(50)=48 uM) over a wide temperature range. Magainins are membrane lytic agents. The protein is Magainins (magainins) of Xenopus laevis (African clawed frog).